The sequence spans 93 residues: Integration host factor subunit beta (93 aa).

The segment at 59-93 (RVGRNPKTGQSVSLDGKFVPHFKPGKELRDRVNDD) is disordered. Residues 82–93 (PGKELRDRVNDD) show a composition bias toward basic and acidic residues.

The protein belongs to the bacterial histone-like protein family. In terms of assembly, heterodimer of an alpha and a beta chain.

Functionally, this protein is one of the two subunits of integration host factor, a specific DNA-binding protein that functions in genetic recombination as well as in transcriptional and translational control. In Stutzerimonas stutzeri (strain A1501) (Pseudomonas stutzeri), this protein is Integration host factor subunit beta.